The chain runs to 309 residues: Ribonuclease Z (309 aa).

The Zn(2+) site is built by H63, H65, D67, H68, H145, D216, and H274. D67 functions as the Proton acceptor in the catalytic mechanism.

The protein belongs to the RNase Z family. As to quaternary structure, homodimer. Zn(2+) serves as cofactor.

It carries out the reaction Endonucleolytic cleavage of RNA, removing extra 3' nucleotides from tRNA precursor, generating 3' termini of tRNAs. A 3'-hydroxy group is left at the tRNA terminus and a 5'-phosphoryl group is left at the trailer molecule.. Functionally, zinc phosphodiesterase, which displays some tRNA 3'-processing endonuclease activity. Probably involved in tRNA maturation, by removing a 3'-trailer from precursor tRNA. This is Ribonuclease Z from Streptococcus thermophilus (strain CNRZ 1066).